Here is a 322-residue protein sequence, read N- to C-terminus: MFEIHPVKKVSVVIPVYNEQESLPELIRRTTKACESLGKEYEILLIDDGSSDNSAHMLVEASQAENSHIVSILLNRNYGQHSAIMAGFSHVTGDLIITLDADLQNPPEEIPRLVAKADEGYDVVGTVRQNRQDSWFRKTASKMINRLIQRTTGKAMGDYGCMLRAYRRHIVDAMLHCHERSTFIPILANIFARRAIEIPVHHAEREFGESKYSFMRLINLMYDLVTCLTTTPLRMLSLLGSIIAIGGFSIAVLLVILRLTFGPQWAAEGVFMLFAVLFTFIGAQFIGMGLLGEYIGRIYTDVRARPRYFVQQVIRPSSKENE.

The Cytoplasmic segment spans residues 1-235 (MFEIHPVKKV…TCLTTTPLRM (235 aa)). The helical transmembrane segment at 236 to 256 (LSLLGSIIAIGGFSIAVLLVI) threads the bilayer. Residues 257 to 269 (LRLTFGPQWAAEG) are Periplasmic-facing. The chain crosses the membrane as a helical span at residues 270-290 (VFMLFAVLFTFIGAQFIGMGL). The Cytoplasmic segment spans residues 291–322 (LGEYIGRIYTDVRARPRYFVQQVIRPSSKENE).

It belongs to the glycosyltransferase 2 family.

Its subcellular location is the cell inner membrane. It carries out the reaction UDP-4-deoxy-4-formamido-beta-L-arabinose + di-trans,octa-cis-undecaprenyl phosphate = 4-deoxy-4-formamido-alpha-L-arabinopyranosyl di-trans,octa-cis-undecaprenyl phosphate + UDP. It functions in the pathway glycolipid biosynthesis; 4-amino-4-deoxy-alpha-L-arabinose undecaprenyl phosphate biosynthesis; 4-amino-4-deoxy-alpha-L-arabinose undecaprenyl phosphate from UDP-4-deoxy-4-formamido-beta-L-arabinose and undecaprenyl phosphate: step 1/2. It participates in bacterial outer membrane biogenesis; lipopolysaccharide biosynthesis. In terms of biological role, catalyzes the transfer of 4-deoxy-4-formamido-L-arabinose from UDP to undecaprenyl phosphate. The modified arabinose is attached to lipid A and is required for resistance to polymyxin and cationic antimicrobial peptides. The protein is Undecaprenyl-phosphate 4-deoxy-4-formamido-L-arabinose transferase of Escherichia coli O17:K52:H18 (strain UMN026 / ExPEC).